The sequence spans 510 residues: Propionyl-CoA carboxylase beta chain (510 aa).

Positions 1–257 constitute a CoA carboxyltransferase N-terminal domain; the sequence is MKDILQELEN…SNRTPAPVRP (257 aa). Residues 1–504 form a carboxyltransferase region; sequence MKDILQELEN…NKKLANPWKK (504 aa). In terms of domain architecture, CoA carboxyltransferase C-terminal spans 264-504; the sequence is RIEDSLDTLI…NKKLANPWKK (241 aa).

Belongs to the AccD/PCCB family. Probably a dodecamer composed of six biotin-containing alpha subunits and six beta subunits.

The catalysed reaction is propanoyl-CoA + hydrogencarbonate + ATP = (S)-methylmalonyl-CoA + ADP + phosphate + H(+). The protein operates within metabolic intermediate metabolism; propanoyl-CoA degradation; succinyl-CoA from propanoyl-CoA: step 1/3. This is Propionyl-CoA carboxylase beta chain from Cereibacter sphaeroides (strain ATCC 17023 / DSM 158 / JCM 6121 / CCUG 31486 / LMG 2827 / NBRC 12203 / NCIMB 8253 / ATH 2.4.1.) (Rhodobacter sphaeroides).